Reading from the N-terminus, the 144-residue chain is Maximins 4/H3 type 3 (144 aa).

An N-terminal signal peptide occupies residues 1-18 (MNFKYIIAVSFFIASAYA). Residues 19 to 43 (RTEEKDVQSLSQRDVLEEESLREIR) constitute a propeptide that is removed on maturation. Asparagine amide is present on Asn-70. The propeptide occupies 74–123 (TAEDHEVMKRLEAVMRDLDSLDHPEEASERQTRGFNQEEIANLFTKKEKR). At Ile-143 the chain carries Isoleucine amide.

It belongs to the bombinin family. In terms of tissue distribution, expressed by the skin glands.

It localises to the secreted. Functionally, maximin-4 shows antibacterial activity against both Gram-positive and Gram-negative bacteria. It also shows antimicrobial activity against the fungus C.albicans, but not against A.flavus nor P.uticale. It has little hemolytic activity. It does not possess a significant cytotoxicity against tumor cell lines. It does not possess a significant anti-HIV activity. In terms of biological role, maximin-H3 shows antibacterial activity against both Gram-positive and Gram-negative bacteria. It also shows antimicrobial activity against the fungus C.albicans. Shows strong hemolytic activity. The chain is Maximins 4/H3 type 3 from Bombina maxima (Giant fire-bellied toad).